The following is a 177-amino-acid chain: NADH-quinone oxidoreductase subunit B (177 aa).

Residues C56, C57, C121, and C151 each coordinate [4Fe-4S] cluster.

This sequence belongs to the complex I 20 kDa subunit family. In terms of assembly, NDH-1 is composed of 14 different subunits. Subunits NuoB, C, D, E, F, and G constitute the peripheral sector of the complex. It depends on [4Fe-4S] cluster as a cofactor.

Its subcellular location is the cell inner membrane. The enzyme catalyses a quinone + NADH + 5 H(+)(in) = a quinol + NAD(+) + 4 H(+)(out). NDH-1 shuttles electrons from NADH, via FMN and iron-sulfur (Fe-S) centers, to quinones in the respiratory chain. Couples the redox reaction to proton translocation (for every two electrons transferred, four hydrogen ions are translocated across the cytoplasmic membrane), and thus conserves the redox energy in a proton gradient. The protein is NADH-quinone oxidoreductase subunit B of Jannaschia sp. (strain CCS1).